Here is a 416-residue protein sequence, read N- to C-terminus: LysM domain-containing GPI-anchored protein 1 (416 aa).

The signal sequence occupies residues 1-27 (MKIPEKPIFLIFVSLILASSLTFTATA). 4 cysteine pairs are disulfide-bonded: Cys34–Cys100, Cys40–Cys163, Cys98–Cys161, and Cys100–Cys163. Asn37 is a glycosylation site (N-linked (GlcNAc...) asparagine). The LysM 1 domain occupies 110-157 (THYKTRPSDNLGSIADSVYGGLVSAEQIQEANSVNDPSLLDVGTSLVI). The N-linked (GlcNAc...) asparagine glycan is linked to Asn165. The LysM 2 domain occupies 176-219 (LSYVVKEIDTLVGIARRYSTTITDLMNVNAMGAPDVSSGDILAV). Cystine bridges form between Cys224–Cys256 and Cys251–Cys279. Asn241 carries N-linked (GlcNAc...) asparagine glycosylation. Residues Asn288, Asn299, and Asn310 are each glycosylated (N-linked (GlcNAc...) asparagine). The interval 356–376 (DGPGSIASSPRSSMLPGGGIL) is disordered. Residue Ala391 is the site of GPI-anchor amidated alanine attachment. Residues 392-416 (SASSVSYFFITFLISIASFSLALSS) constitute a propeptide, removed in mature form.

As to quaternary structure, interacts with peptidoglycans.

It localises to the cell membrane. Its subcellular location is the secreted. In terms of biological role, required as a cell surface receptor for peptidoglycan (PGN) elicitor signaling leading to innate immunity. Plays an essential role in detecting PGNs and restricting bacterial growth (of Pseudomonas syringae pv. tomato DC3000 for example). The sequence is that of LysM domain-containing GPI-anchored protein 1 (LYM1) from Arabidopsis thaliana (Mouse-ear cress).